The sequence spans 389 residues: MQQHSSKTAYVYSDKLLQYRFHDQHPFNQMRLKLTTELLLNANLLSPEQIVQPRIATDDELMLIHKYDYVEAIKHASHGIISEDEAKKYGLNDEENGQFKHMHRHSATIVGGALTLADLIMSGKVLNGCHLGGGLHHAQPGRASGFCIYNDIAITAQYLAKEYNQRVLIIDTDAHHGDGTQWSFYADNHVTTYSIHETGKFLFPGSGHYTERGEDIGYGHTVNVPLEPYTEDASFLECFKLTVEPVVKSFKPDIILSVNGVDIHYRDPLTHLNCTLHSLYEIPYFVKYLADSYTNGKVIMFGGGGYNIWRVVPRAWSHVFLSLIDQPIQSGYLPLEWINKWKHYSSELLPKRWEDRLNDYTYVPRTKEISEKNKKLALHIASWYESTRQ.

The protein belongs to the histone deacetylase family.

It participates in ketone degradation; acetoin degradation. Functionally, role in growth on acetoin or butanediol. Involved in the breakdown of these compounds used as a carbon source. The protein is Acetoin utilization protein AcuC (acuC) of Staphylococcus aureus (strain COL).